The sequence spans 115 residues: NADH-ubiquinone oxidoreductase chain 3 (115 aa).

The next 3 helical transmembrane spans lie at 3–23, 55–75, and 84–104; these read LLLT…IAFW, FFLV…LLPL, and LNTM…SLAY.

This sequence belongs to the complex I subunit 3 family. Core subunit of respiratory chain NADH dehydrogenase (Complex I) which is composed of 45 different subunits. Interacts with TMEM186. Interacts with TMEM242.

It is found in the mitochondrion inner membrane. The enzyme catalyses a ubiquinone + NADH + 5 H(+)(in) = a ubiquinol + NAD(+) + 4 H(+)(out). Core subunit of the mitochondrial membrane respiratory chain NADH dehydrogenase (Complex I) which catalyzes electron transfer from NADH through the respiratory chain, using ubiquinone as an electron acceptor. Essential for the catalytic activity of complex I. This chain is NADH-ubiquinone oxidoreductase chain 3, found in Balaenoptera musculus (Blue whale).